We begin with the raw amino-acid sequence, 437 residues long: Enolase (437 aa).

Gln-162 is a binding site for (2R)-2-phosphoglycerate. The active-site Proton donor is Glu-204. Positions 251, 297, and 324 each coordinate Mg(2+). Residues Lys-349, Arg-378, Ser-379, and Lys-400 each coordinate (2R)-2-phosphoglycerate. Catalysis depends on Lys-349, which acts as the Proton acceptor.

The protein belongs to the enolase family. Mg(2+) is required as a cofactor.

Its subcellular location is the cytoplasm. It localises to the secreted. It is found in the cell surface. It catalyses the reaction (2R)-2-phosphoglycerate = phosphoenolpyruvate + H2O. Its pathway is carbohydrate degradation; glycolysis; pyruvate from D-glyceraldehyde 3-phosphate: step 4/5. Catalyzes the reversible conversion of 2-phosphoglycerate (2-PG) into phosphoenolpyruvate (PEP). It is essential for the degradation of carbohydrates via glycolysis. The polypeptide is Enolase (Chlorobium luteolum (strain DSM 273 / BCRC 81028 / 2530) (Pelodictyon luteolum)).